Here is a 589-residue protein sequence, read N- to C-terminus: Protein NRT1/ PTR FAMILY 7.2 (589 aa).

2 consecutive transmembrane segments (helical) span residues 32-52 (WLTA…FFGV) and 78-98 (WTGT…SYWG). The residue at position 102 (Thr102) is a Phosphothreonine. Helical transmembrane passes span 105–125 (IFQA…GALL), 147–167 (VLFY…QPNI), 187–207 (IAFF…SNTV), 217–237 (WPLG…LFLI), 343–363 (IWLC…LFVV), 377–397 (IPAS…IFAY), 423–443 (MGIG…VEIH), 464–484 (IFWQ…MYVG), 504–524 (LCMA…SIVM), and 548–568 (FYFL…ICAK).

It belongs to the major facilitator superfamily. Proton-dependent oligopeptide transporter (POT/PTR) (TC 2.A.17) family. As to expression, expressed in xylem parenchyma cells within the vasculature. Expressed in siliques and flowers. Higher expression in shoots than in roots.

The protein localises to the cell membrane. Its function is as follows. Low-affinity nitrate transporter. Involved in nitrate removal from xylem sap. Not involved in oligopeptides transport. The polypeptide is Protein NRT1/ PTR FAMILY 7.2 (NPF7.2) (Arabidopsis thaliana (Mouse-ear cress)).